The sequence spans 202 residues: MSTLLGWLGRLWFGSLGTARPDPSTAVAAAGSTDVTSTQDAWAVLSLVNEWVKHSEAKLGVVLAFVGVMAAGLITIAADIPCPSLVILCIEGAAAVLILASAVLASLGLLPRFKGQSEEAQMNPLFYGDVANHFKGKSEEYVTALSGVIGSQDALIRQIARQVHANADVASRKYLWANRSILVGMLGLVCLFVLAAGVALGW.

3 helical membrane passes run 60-80 (GVVLAFVGVMAAGLITIAADI), 85-105 (LVILCIEGAAAVLILASAVLA), and 181-201 (ILVGMLGLVCLFVLAAGVALG).

It is found in the cell membrane. Functionally, pycsar (pyrimidine cyclase system for antiphage resistance) provides immunity against bacteriophage. The pyrimidine cyclase (PycC) synthesizes cyclic nucleotides in response to infection; these serve as specific second messenger signals. The signals activate the adjacent effector, leading to bacterial cell death and abortive phage infection. A clade D Pycsar system. Its function is as follows. The effector gene of a two-gene Pycsar system. Expression of this and adjacent uridylate cyclase PtPycC (AC A0A4V2JTK3) probably confers resistance to bacteriophage. The genes are probably only expressed in response to bacteriophage infection. Probably only responds to cUMP (produced by its cognate NTP cyclase), acts by impairing membrane integrity. The polypeptide is Pycsar effector protein PtPycTM (Propioniciclava tarda).